The primary structure comprises 648 residues: Threonine--tRNA ligase (648 aa).

Residues 1–62 (MVEIILPDGS…PHGAQVAIIT (62 aa)) form the TGS domain. Positions 243-536 (DHRRIGKDLD…LVEHYAGWFP (294 aa)) are catalytic. Zn(2+)-binding residues include Cys-336, His-387, and His-513.

The protein belongs to the class-II aminoacyl-tRNA synthetase family. In terms of assembly, homodimer. The cofactor is Zn(2+).

It is found in the cytoplasm. The enzyme catalyses tRNA(Thr) + L-threonine + ATP = L-threonyl-tRNA(Thr) + AMP + diphosphate + H(+). Functionally, catalyzes the attachment of threonine to tRNA(Thr) in a two-step reaction: L-threonine is first activated by ATP to form Thr-AMP and then transferred to the acceptor end of tRNA(Thr). Also edits incorrectly charged L-seryl-tRNA(Thr). The protein is Threonine--tRNA ligase of Magnetococcus marinus (strain ATCC BAA-1437 / JCM 17883 / MC-1).